A 398-amino-acid polypeptide reads, in one-letter code: Cathepsin E (398 aa).

Positions 1-21 (MKPLFVLLLLLLLLDLAQAQG) are cleaved as a signal peptide. Residues 22 to 58 (VLHRVPLRRHQSLRKKLRAQGQLSDFWRSHNLDMIEF) constitute a propeptide, activation peptide. The Peptidase A1 domain occupies 80–394 (YFGTVSIGSP…DRGNNQVGLA (315 aa)). Asn-92 carries N-linked (GlcNAc...) asparagine glycosylation. The active site involves Asp-98. 2 cysteine pairs are disulfide-bonded: Cys-111-Cys-116 and Cys-274-Cys-278. Residue Asp-283 is part of the active site.

The protein belongs to the peptidase A1 family. Homodimer; disulfide-linked. In terms of processing, glycosylated. The nature of the carbohydrate chain varies between cell types. In brain microglia, the proenzyme contains a high mannose-type oligosaccharide, while the mature enzyme contains a complex-type oligosaccharide. In stomach and spleen, the mature enzyme contains a high mannose-type oligosaccharide. In erythrocyte membranes, the mature enzyme contains a complex-type oligosaccharide. In terms of tissue distribution, expressed abundantly in lymphocytes and macrophages of the thymus and spleen, and in the M cells of the intestine. In the brain, expression is limited to reactive microglial cells, the large pyrimidial neurons in the cerebral cortex, the CA1 and CA3 pyrimidial neurons of the hippocampus, the large neurons of the neostriatum, and the Purkinje neurons of the cerebellum.

It is found in the endosome. The enzyme catalyses Similar to cathepsin D, but slightly broader specificity.. In terms of biological role, may have a role in immune function. Probably involved in the processing of antigenic peptides during MHC class II-mediated antigen presentation. May play a role in activation-induced lymphocyte depletion in the thymus, and in neuronal degeneration and glial cell activation in the brain. In Rattus norvegicus (Rat), this protein is Cathepsin E (Ctse).